A 186-amino-acid polypeptide reads, in one-letter code: Peptidyl-tRNA hydrolase (186 aa).

Tyr-14 is a binding site for tRNA. The Proton acceptor role is filled by His-19. TRNA is bound by residues Tyr-61, Asn-63, and Asn-107.

It belongs to the PTH family. Monomer.

The protein localises to the cytoplasm. It catalyses the reaction an N-acyl-L-alpha-aminoacyl-tRNA + H2O = an N-acyl-L-amino acid + a tRNA + H(+). Its function is as follows. Hydrolyzes ribosome-free peptidyl-tRNAs (with 1 or more amino acids incorporated), which drop off the ribosome during protein synthesis, or as a result of ribosome stalling. Catalyzes the release of premature peptidyl moieties from peptidyl-tRNA molecules trapped in stalled 50S ribosomal subunits, and thus maintains levels of free tRNAs and 50S ribosomes. This is Peptidyl-tRNA hydrolase from Helicobacter pylori (strain G27).